The chain runs to 65 residues: Muscarinic toxin-like protein 2 (65 aa).

4 cysteine pairs are disulfide-bonded: C3–C24, C17–C42, C46–C57, and C58–C63.

This sequence belongs to the three-finger toxin family. Short-chain subfamily. Type C muscarinic toxin sub-subfamily. As to quaternary structure, monomer. Expressed by the venom gland.

The protein localises to the secreted. The chain is Muscarinic toxin-like protein 2 from Naja kaouthia (Monocled cobra).